We begin with the raw amino-acid sequence, 459 residues long: Bifunctional protein GlmU (459 aa).

The pyrophosphorylase stretch occupies residues 1 to 230 (MSNRFAVILA…FDETLGVNDR (230 aa)). Residues 9-12 (LAAG), lysine 23, glutamine 73, and 78-79 (GT) contribute to the UDP-N-acetyl-alpha-D-glucosamine site. Mg(2+) is bound at residue aspartate 103. UDP-N-acetyl-alpha-D-glucosamine-binding residues include glycine 140, glutamate 155, asparagine 170, and asparagine 228. Residue asparagine 228 participates in Mg(2+) binding. The tract at residues 231 to 251 (VALSQAEIIMKNRINRKNMVN) is linker. The segment at 252-459 (GVTIIDPSNT…VDQLLNKKKS (208 aa)) is N-acetyltransferase. UDP-N-acetyl-alpha-D-glucosamine contacts are provided by arginine 333 and lysine 351. The active-site Proton acceptor is the histidine 363. Tyrosine 366 and asparagine 377 together coordinate UDP-N-acetyl-alpha-D-glucosamine. Acetyl-CoA is bound by residues 386 to 387 (NY), alanine 423, and arginine 440.

The protein in the N-terminal section; belongs to the N-acetylglucosamine-1-phosphate uridyltransferase family. It in the C-terminal section; belongs to the transferase hexapeptide repeat family. As to quaternary structure, homotrimer. It depends on Mg(2+) as a cofactor.

It localises to the cytoplasm. The enzyme catalyses alpha-D-glucosamine 1-phosphate + acetyl-CoA = N-acetyl-alpha-D-glucosamine 1-phosphate + CoA + H(+). The catalysed reaction is N-acetyl-alpha-D-glucosamine 1-phosphate + UTP + H(+) = UDP-N-acetyl-alpha-D-glucosamine + diphosphate. Its pathway is nucleotide-sugar biosynthesis; UDP-N-acetyl-alpha-D-glucosamine biosynthesis; N-acetyl-alpha-D-glucosamine 1-phosphate from alpha-D-glucosamine 6-phosphate (route II): step 2/2. The protein operates within nucleotide-sugar biosynthesis; UDP-N-acetyl-alpha-D-glucosamine biosynthesis; UDP-N-acetyl-alpha-D-glucosamine from N-acetyl-alpha-D-glucosamine 1-phosphate: step 1/1. It functions in the pathway bacterial outer membrane biogenesis; LPS lipid A biosynthesis. Its function is as follows. Catalyzes the last two sequential reactions in the de novo biosynthetic pathway for UDP-N-acetylglucosamine (UDP-GlcNAc). The C-terminal domain catalyzes the transfer of acetyl group from acetyl coenzyme A to glucosamine-1-phosphate (GlcN-1-P) to produce N-acetylglucosamine-1-phosphate (GlcNAc-1-P), which is converted into UDP-GlcNAc by the transfer of uridine 5-monophosphate (from uridine 5-triphosphate), a reaction catalyzed by the N-terminal domain. This Bacillus anthracis (strain A0248) protein is Bifunctional protein GlmU.